Reading from the N-terminus, the 154-residue chain is UPF0756 membrane protein YtwI (154 aa).

A run of 4 helical transmembrane segments spans residues 8 to 28 (FLIL…LFAV), 54 to 74 (WGVT…EIGF), 87 to 107 (WIAL…LTLL), and 117 to 137 (LVIG…GPLI).

The protein belongs to the UPF0756 family.

Its subcellular location is the cell membrane. This Bacillus subtilis (strain 168) protein is UPF0756 membrane protein YtwI (ytwI).